A 273-amino-acid polypeptide reads, in one-letter code: Chlorophyll a-b binding protein 8, chloroplastic (273 aa).

A chloroplast-targeting transit peptide spans 1–32; sequence MATQALISSSSISTSAEAARQIIGSRISQSVT. Arg-33 is subject to N2-acetylarginine. A chlorophyll b-binding site is contributed by Trp-56. Chlorophyll a is bound by residues Phe-76, Ser-82, and Glu-100. Arg-105 contributes to the chlorophyll b binding site. Residues 106 to 126 traverse the membrane as a helical segment; sequence FAMLGAAGAIAPEILGKAGLI. Ile-140, Glu-167, and Arg-170 together coordinate chlorophyll b. Residues Lys-224, Glu-225, Asn-228, Arg-230, Gln-242, and His-257 each coordinate chlorophyll a. A helical transmembrane segment spans residues 231 to 251; the sequence is LAMLAILGYFIQALVTGVGPY.

Belongs to the light-harvesting chlorophyll a/b-binding (LHC) protein family. As to quaternary structure, the LHC complex consists of chlorophyll a-b binding proteins. Binds at least 14 chlorophylls (8 Chl-a and 6 Chl-b) and carotenoids such as lutein and neoxanthin. serves as cofactor. Photoregulated by reversible phosphorylation of its threonine residues.

The protein resides in the plastid. The protein localises to the chloroplast thylakoid membrane. In terms of biological role, the light-harvesting complex (LHC) functions as a light receptor, it captures and delivers excitation energy to photosystems with which it is closely associated. This is Chlorophyll a-b binding protein 8, chloroplastic (CAB8) from Solanum lycopersicum (Tomato).